The sequence spans 274 residues: DNA repair protein Rad1 (274 aa).

Belongs to the rad1 family. As to quaternary structure, component of the 9-1-1 checkpoint clamp complex consisting of Rad9 isoform A, Rad1 and Hus1-like; the interaction with Hus1-like is direct. Does not interact directly with Rad9; this interaction is probably mediated by Hus1-like. This complex probably also forms with Rad9 isoform B, however 9-1-1 complex containing Rad9 isoform A localizes to the nuclear periphery. In terms of tissue distribution, expressed in ovary.

It is found in the cytoplasm. Its subcellular location is the nucleus. The protein resides in the nucleus envelope. This chain is DNA repair protein Rad1, found in Drosophila melanogaster (Fruit fly).